Reading from the N-terminus, the 787-residue chain is Aminodeoxychorismate synthase (787 aa).

One can recognise a Glutamine amidotransferase type-1 domain in the interval 16 to 233 (HVLFIDSYDS…LKLSFINNVK (218 aa)). Catalysis depends on residues Cys112, His207, and Glu209. The interval 304–787 (MSSSVISENT…KLESNLQIFM (484 aa)) is PABB component.

In the C-terminal section; belongs to the anthranilate synthase component I family.

It localises to the cytoplasm. The enzyme catalyses chorismate + L-glutamine = 4-amino-4-deoxychorismate + L-glutamate. It functions in the pathway cofactor biosynthesis; tetrahydrofolate biosynthesis; 4-aminobenzoate from chorismate: step 1/2. In terms of biological role, catalyzes the biosynthesis of 4-amino-4-deoxychorismate (ADC) from chorismate and glutamine. Required for the synthesis of 4-aminobenzoate (PABA), an important component in tetrahydrofolate biosynthesis. The chain is Aminodeoxychorismate synthase (ABZ1) from Saccharomyces cerevisiae (strain ATCC 204508 / S288c) (Baker's yeast).